Here is an 827-residue protein sequence, read N- to C-terminus: Leucine--tRNA ligase (827 aa).

The 'HIGH' region signature appears at 46-56 (PYPSGRIHMGH). The 'KMSKS' region signature appears at 585–589 (KMSKS). Lys-588 lines the ATP pocket.

Belongs to the class-I aminoacyl-tRNA synthetase family.

It localises to the cytoplasm. The enzyme catalyses tRNA(Leu) + L-leucine + ATP = L-leucyl-tRNA(Leu) + AMP + diphosphate. The protein is Leucine--tRNA ligase of Desulfotalea psychrophila (strain LSv54 / DSM 12343).